Here is a 351-residue protein sequence, read N- to C-terminus: Nicotinate-nucleotide--dimethylbenzimidazole phosphoribosyltransferase (351 aa).

The active-site Proton acceptor is the E318.

This sequence belongs to the CobT family.

The catalysed reaction is 5,6-dimethylbenzimidazole + nicotinate beta-D-ribonucleotide = alpha-ribazole 5'-phosphate + nicotinate + H(+). It participates in nucleoside biosynthesis; alpha-ribazole biosynthesis; alpha-ribazole from 5,6-dimethylbenzimidazole: step 1/2. In terms of biological role, catalyzes the synthesis of alpha-ribazole-5'-phosphate from nicotinate mononucleotide (NAMN) and 5,6-dimethylbenzimidazole (DMB). The protein is Nicotinate-nucleotide--dimethylbenzimidazole phosphoribosyltransferase of Shewanella frigidimarina (strain NCIMB 400).